The primary structure comprises 260 residues: Aspartate/glutamate leucyltransferase (260 aa).

It belongs to the R-transferase family. Bpt subfamily.

The protein localises to the cytoplasm. The enzyme catalyses N-terminal L-glutamyl-[protein] + L-leucyl-tRNA(Leu) = N-terminal L-leucyl-L-glutamyl-[protein] + tRNA(Leu) + H(+). The catalysed reaction is N-terminal L-aspartyl-[protein] + L-leucyl-tRNA(Leu) = N-terminal L-leucyl-L-aspartyl-[protein] + tRNA(Leu) + H(+). Its function is as follows. Functions in the N-end rule pathway of protein degradation where it conjugates Leu from its aminoacyl-tRNA to the N-termini of proteins containing an N-terminal aspartate or glutamate. The protein is Aspartate/glutamate leucyltransferase of Sphingomonas elodea.